The following is a 383-amino-acid chain: MAKHLFTSESVSEGHPDKIADQISDAVLDAILEQDSHARVACETYVKTGMVMVGGEITTSAWVDIEEITRKTIRDIGYTNSDMGFDADSCAILNTIGKQSPDINQGVDRTSPEEQGAGDQGLMFGYACNETEVLMPAPITYSHRLVQRQAQVRKSGELNWLRPDAKSQVTFAYENGKPVGIDAVVLSTQHSEDISQKDLIEAVMETIIKPVLPAELITSATKFFINPTGRFVIGGPMGDCGLTGRKIIVDTYGGMARHGGGAFSGKDPSKVDRSAAYAARYVAKNIVAAGLADKCELQVSYAIGIAEPTSISVETFGTSKLEESRLIELIREHFDLRPYGLIKMLDLERPIYLPTAAYGHFGREEFPWERTDKAEALRAAAGL.

Residue His15 coordinates ATP. Asp17 contacts Mg(2+). Position 43 (Glu43) interacts with K(+). The L-methionine site is built by Glu56 and Gln99. Residues 99 to 109 (QSPDINQGVDR) are flexible loop. Residues 164–166 (DAK), 230–231 (RF), Asp239, 245–246 (RK), Ala262, and Lys266 contribute to the ATP site. Asp239 serves as a coordination point for L-methionine. Lys270 is an L-methionine binding site.

It belongs to the AdoMet synthase family. As to quaternary structure, homotetramer; dimer of dimers. The cofactor is Mg(2+). It depends on K(+) as a cofactor.

The protein localises to the cytoplasm. The catalysed reaction is L-methionine + ATP + H2O = S-adenosyl-L-methionine + phosphate + diphosphate. The protein operates within amino-acid biosynthesis; S-adenosyl-L-methionine biosynthesis; S-adenosyl-L-methionine from L-methionine: step 1/1. In terms of biological role, catalyzes the formation of S-adenosylmethionine (AdoMet) from methionine and ATP. The overall synthetic reaction is composed of two sequential steps, AdoMet formation and the subsequent tripolyphosphate hydrolysis which occurs prior to release of AdoMet from the enzyme. The polypeptide is S-adenosylmethionine synthase (Pseudoalteromonas translucida (strain TAC 125)).